The following is a 493-amino-acid chain: Cytochrome P450 2W1 (493 aa).

The first 23 residues, 1–23 (MALLLLGVWGILLLLGLWGLLQG), serve as a signal peptide directing secretion. The N-linked (GlcNAc...) asparagine glycan is linked to asparagine 180. Cysteine 436 contacts heme.

Belongs to the cytochrome P450 family. It depends on heme as a cofactor. In terms of tissue distribution, detected in colon, ileum, and testes.

Its subcellular location is the endoplasmic reticulum lumen. The protein resides in the cell membrane. The protein localises to the microsome membrane. The enzyme catalyses all-trans-retinoate + reduced [NADPH--hemoprotein reductase] + O2 = all-trans-4-hydroxyretinoate + oxidized [NADPH--hemoprotein reductase] + H2O + H(+). It catalyses the reaction 1-(9Z-octadecenoyl)-sn-glycero-3-phosphocholine + reduced [NADPH--hemoprotein reductase] + O2 = 1-[8-hydroxy-(9Z)-octadecenoyl]-sn-glycero-3-phosphocholine + oxidized [NADPH--hemoprotein reductase] + H2O + H(+). It carries out the reaction 1-(9Z-octadecenoyl)-sn-glycero-3-phosphocholine + reduced [NADPH--hemoprotein reductase] + O2 = 1-[11-hydroxy-(9Z)-octadecenoyl]-sn-glycero-3-phosphocholine + oxidized [NADPH--hemoprotein reductase] + H2O + H(+). The catalysed reaction is 1-(9Z-octadecenoyl)-sn-glycero-3-phosphocholine + reduced [NADPH--hemoprotein reductase] + O2 = 1-[(9S,10R)-epoxy-octadecanoyl]-sn-glycero-3-phosphocholine + oxidized [NADPH--hemoprotein reductase] + H2O + H(+). The enzyme catalyses 1-(9Z-octadecenoyl)-sn-glycero-3-phosphocholine + reduced [NADPH--hemoprotein reductase] + O2 = 1-[(9R,10S)-epoxy-octadecanoyl]-sn-glycero-3-phosphocholine + oxidized [NADPH--hemoprotein reductase] + H2O + H(+). Functionally, a cytochrome P450 monooxygenase that may play a role in retinoid and phospholipid metabolism. Catalyzes the hydroxylation of saturated carbon hydrogen bonds. Hydroxylates all trans-retinoic acid (atRA) to 4-hydroxyretinoate and may regulate atRA clearance. Other retinoids such as all-trans retinol and all-trans retinal are potential endogenous substrates. Catalyzes both epoxidation of double bonds and hydroxylation of carbon hydrogen bonds of the fatty acyl chain of 1-acylphospholipids/2-lysophospholipids. Can metabolize various lysophospholipids classes including lysophosphatidylcholines (LPCs), lysophosphatidylinositols (LPIs), lysophosphatidylserines (LPSs), lysophosphatidylglycerols (LPGs), lysophosphatidylethanolamines (LPEs) and lysophosphatidic acids (LPAs). Has low or no activity toward 2-acylphospholipids/1-lysophospholipids, diacylphospholipids and free fatty acids. May play a role in tumorigenesis by activating procarcinogens such as aflatoxin B1, polycyclic aromatic hydrocarbon dihydrodiols and aromatic amines. Mechanistically, uses molecular oxygen inserting one oxygen atom into a substrate, and reducing the second into a water molecule, with two electrons provided by NADPH via cytochrome P450 reductase (CPR; NADPH-ferrihemoprotein reductase). This chain is Cytochrome P450 2W1 (Cyp2w1), found in Mus musculus (Mouse).